Reading from the N-terminus, the 133-residue chain is MPLSLATSNRVPEAWRDLIISAMSNLAPLGRDPNTKEFTDELHHLSGEDMGTVMEILGIAVAEGFLEYDDHYRLILGPAGEEYVRLSSRVKVEETRRLTLRRALRRFRDKRRACRHLSLGDKALYDYYYHGGL.

This is an uncharacterized protein from Methanothermobacter marburgensis (strain ATCC BAA-927 / DSM 2133 / JCM 14651 / NBRC 100331 / OCM 82 / Marburg) (Methanobacterium thermoautotrophicum).